The following is a 319-amino-acid chain: F-box only protein 8 (319 aa).

Residues 68–111 (FINLEMLPPELSFTILSYLNATDLCLASCVWQDLANDELLWQGL) enclose the F-box domain. The 131-residue stretch at 146-276 (FNANPEEGVS…LILLSIDLTS (131 aa)) folds into the SEC7 domain.

High expression in brain, heart, kidney, liver, lung, skeletal muscle, testis, and day-7 embryos.

Functionally, may promote guanine-nucleotide exchange on an ARF. Promotes the activation of ARF through replacement of GDP with GTP (Potential). In Mus musculus (Mouse), this protein is F-box only protein 8 (Fbxo8).